The sequence spans 171 residues: Protein-export protein SecB (171 aa).

The protein belongs to the SecB family. Homotetramer, a dimer of dimers. One homotetramer interacts with 1 SecA dimer.

The protein localises to the cytoplasm. One of the proteins required for the normal export of preproteins out of the cell cytoplasm. It is a molecular chaperone that binds to a subset of precursor proteins, maintaining them in a translocation-competent state. It also specifically binds to its receptor SecA. This is Protein-export protein SecB from Granulibacter bethesdensis (strain ATCC BAA-1260 / CGDNIH1).